Reading from the N-terminus, the 1621-residue chain is ALK tyrosine kinase receptor (1621 aa).

An N-terminal signal peptide occupies residues 1 to 18 (MGAAGFLWLLPPLLLAAA). At 19–1042 (SYSGAATDQR…PHLPLSLILS (1024 aa)) the chain is on the extracellular side. The tract at residues 48–70 (RLQRKSLAVDFVVPSLFRVYARD) is heparin-binding region. N-linked (GlcNAc...) asparagine glycosylation is found at Asn-174, Asn-248, Asn-289, Asn-328, Asn-415, Asn-428, Asn-449, Asn-567, Asn-575, Asn-631, and Asn-673. The MAM 1 domain occupies 268-431 (LECSFDFPCE…DFFALKNCSE (164 aa)). Positions 441-477 (LQSSFTCWNGTVLQLGQACDFHQDCAQGEDEGQLCSK) constitute an LDL-receptor class A domain. In terms of domain architecture, MAM 2 spans 482–640 (FYCNFENGFC…NISISLDCYL (159 aa)). Cysteines 692 and 705 form a disulfide. Asn-713 carries N-linked (GlcNAc...) asparagine glycosylation. Cys-787 and Cys-798 are joined by a disulfide. N-linked (GlcNAc...) asparagine glycosylation is found at Asn-812, Asn-868, and Asn-890. Cys-910 and Cys-932 are joined by a disulfide. A glycan (N-linked (GlcNAc...) asparagine) is linked at Asn-990. 3 disulfides stabilise this stretch: Cys-991–Cys-999, Cys-994–Cys-1010, and Cys-1012–Cys-1025. Positions 991–1029 (CSHCEVDECHMDPESHKVICFCDHGTVLADDGVSCIVSP) are EGF-like. Residues 1043 to 1063 (VVTSALVAALVLAFSGIMIVY) traverse the membrane as a helical segment. Residues 1064–1621 (RRKHQELQAM…SKNKVTQPGP (558 aa)) lie on the Cytoplasmic side of the membrane. A phosphotyrosine mark is found at Tyr-1082, Tyr-1096, and Tyr-1100. The 277-residue stretch at 1120–1396 (ITLIRGLGHG…IEYCTQDPDV (277 aa)) folds into the Protein kinase domain. ATP-binding positions include 1126–1134 (LGHGAFGEV) and His-1128. Position 1135 is a phosphotyrosine (Tyr-1135). Residues Lys-1154 and 1201–1203 (ELM) each bind ATP. Asp-1253 (proton acceptor) is an active-site residue. Position 1274 (Asp-1274) interacts with ATP. Tyr-1282 is modified (phosphotyrosine). A disordered region spans residues 1412 to 1556 (EEKVPMRPKD…WTGPGAGPRR (145 aa)). Basic and acidic residues predominate over residues 1414-1423 (KVPMRPKDPE). Residues 1441 to 1461 (SAAPQPAALTAPGPSVKKPPG) are compositionally biased toward low complexity. Residues 1462-1472 (AGAGAGAGAGA) are compositionally biased toward gly residues. Polar residues predominate over residues 1506–1518 (NKPTSLWNPTYGS). Tyr-1516 carries the phosphotyrosine modification. Residues 1543 to 1552 (AEGGWTGPGA) are compositionally biased toward gly residues.

The protein belongs to the protein kinase superfamily. Tyr protein kinase family. Insulin receptor subfamily. As to quaternary structure, homodimer; homodimerizes following heparin- and ligand-binding. Interacts with CBL, IRS1, PIK3R1 and PLCG1. Interacts with FRS2 and SHC1. Interacts with PTN and MDK. Phosphorylated at tyrosine residues by autocatalysis, which activates kinase activity. In cells not stimulated by a ligand, receptor protein tyrosine phosphatase beta and zeta complex (PTPRB/PTPRZ1) dephosphorylates ALK at the sites in ALK that are undergoing autophosphorylation through autoactivation. Mainly expressed in central nervous system (CNS) and other parts of the brain such as the paraventricular nucleus (PVN) of the hypothalamus. Expression is also found in peripheral nervous systems, eye, nasal epithelium, olfactory nerve, tongue, skin, tissue surrounding the esophagus, stomach, midgut, as well as testis and ovary.

It localises to the cell membrane. It catalyses the reaction L-tyrosyl-[protein] + ATP = O-phospho-L-tyrosyl-[protein] + ADP + H(+). Activated upon ALKAL2 ligand-binding. ALKAL2-driven activation is coupled with heparin-binding. Following ligand-binding, homodimerizes and autophosphorylates, activating its kinase activity. Inactivated through dephosphorylation by receptor protein tyrosine phosphatase beta and zeta complex (PTPRB/PTPRZ1) when there is no stimulation by a ligand. In terms of biological role, neuronal receptor tyrosine kinase that is essentially and transiently expressed in specific regions of the central and peripheral nervous systems and plays an important role in the genesis and differentiation of the nervous system. Also acts as a key thinness protein involved in the resistance to weight gain: in hypothalamic neurons, controls energy expenditure acting as a negative regulator of white adipose tissue lipolysis and sympathetic tone to fine-tune energy homeostasis. Following activation by ALKAL2 ligand at the cell surface, transduces an extracellular signal into an intracellular response. In contrast, ALKAL1 is not a potent physiological ligand for ALK. Ligand-binding to the extracellular domain induces tyrosine kinase activation, leading to activation of the mitogen-activated protein kinase (MAPK) pathway. Phosphorylates almost exclusively at the first tyrosine of the Y-x-x-x-Y-Y motif. Induces tyrosine phosphorylation of CBL, FRS2, IRS1 and SHC1, as well as of the MAP kinases MAPK1/ERK2 and MAPK3/ERK1. ALK activation may also be regulated by pleiotrophin (PTN) and midkine (MDK). PTN-binding induces MAPK pathway activation, which is important for the anti-apoptotic signaling of PTN and regulation of cell proliferation. MDK-binding induces phosphorylation of the ALK target insulin receptor substrate (IRS1), activates mitogen-activated protein kinases (MAPKs) and PI3-kinase, resulting also in cell proliferation induction. Drives NF-kappa-B activation, probably through IRS1 and the activation of the AKT serine/threonine kinase. Recruitment of IRS1 to activated ALK and the activation of NF-kappa-B are essential for the autocrine growth and survival signaling of MDK. This is ALK tyrosine kinase receptor from Mus musculus (Mouse).